A 179-amino-acid chain; its full sequence is Large ribosomal subunit protein uL6 (179 aa).

It belongs to the universal ribosomal protein uL6 family. Part of the 50S ribosomal subunit.

This protein binds to the 23S rRNA, and is important in its secondary structure. It is located near the subunit interface in the base of the L7/L12 stalk, and near the tRNA binding site of the peptidyltransferase center. This is Large ribosomal subunit protein uL6 from Prochlorococcus marinus (strain MIT 9312).